Consider the following 126-residue polypeptide: Hydrogenase maturation factor HypA (126 aa).

H2 provides a ligand contact to Ni(2+). The Zn(2+) site is built by C78, C81, C97, and C100.

This sequence belongs to the HypA/HybF family.

Its function is as follows. Involved in the maturation of [NiFe] hydrogenases. Required for nickel insertion into the metal center of the hydrogenase. The polypeptide is Hydrogenase maturation factor HypA (Methanococcus maripaludis (strain C5 / ATCC BAA-1333)).